Here is a 104-residue protein sequence, read N- to C-terminus: Pole-localizer protein TmaR (104 aa).

Coiled-coil stretches lie at residues 13–43 (RKNKLKRELLDNEKKVRDNRKRVELLENLLD) and 76–96 (SAEISKARRDISRRIRELTEE).

The protein belongs to the pole-localizer TmaR family.

Its subcellular location is the cytoplasm. In terms of biological role, pole-localizer protein involved in the regulation of several cellular processes. The sequence is that of Pole-localizer protein TmaR from Vibrio vulnificus (strain CMCP6).